A 492-amino-acid polypeptide reads, in one-letter code: GTPase Der (492 aa).

The EngA-type G 1 domain maps to 3-166; sequence PVIALVGRPN…AVLGIFPKDA (164 aa). GTP contacts are provided by residues 9-16, 56-60, and 118-121; these read GRPNVGKS, DTGGI, and NKVD. The segment at 166 to 190 is disordered; sequence AGEPEEGAEAEEEVQEGQEAKRIPG. Residues 168-181 show a composition bias toward acidic residues; that stretch reads EPEEGAEAEEEVQE. The EngA-type G 2 domain maps to 197–370; sequence IKLAIIGRPN…SVQAAFHSAV (174 aa). GTP-binding positions include 203 to 210, 250 to 254, and 315 to 318; these read GRPNVGKS, DTAGV, and NKWD. A KH-like domain is found at 371–455; it reads TRWPTSRLTQ…PIRIEYKGGE (85 aa). A disordered region spans residues 453 to 492; that stretch reads GGENPYEGNKNKLTDRQVNKKRRLMSHHKKAEKKRKDKRK. Residues 461–470 are compositionally biased toward basic and acidic residues; the sequence is NKNKLTDRQV. Basic residues predominate over residues 471 to 492; sequence NKKRRLMSHHKKAEKKRKDKRK.

The protein belongs to the TRAFAC class TrmE-Era-EngA-EngB-Septin-like GTPase superfamily. EngA (Der) GTPase family. Associates with the 50S ribosomal subunit.

Its function is as follows. GTPase that plays an essential role in the late steps of ribosome biogenesis. The polypeptide is GTPase Der (Ectopseudomonas mendocina (strain ymp) (Pseudomonas mendocina)).